Here is a 389-residue protein sequence, read N- to C-terminus: Chalcone synthase 5 (389 aa).

Cys164 is an active-site residue.

This sequence belongs to the thiolase-like superfamily. Chalcone/stilbene synthases family.

It catalyses the reaction (E)-4-coumaroyl-CoA + 3 malonyl-CoA + 3 H(+) = 2',4,4',6'-tetrahydroxychalcone + 3 CO2 + 4 CoA. The protein operates within secondary metabolite biosynthesis; flavonoid biosynthesis. The primary product of this enzyme is 4,2',4',6'-tetrahydroxychalcone (also termed naringenin-chalcone or chalcone) which can under specific conditions spontaneously isomerize into naringenin. This is Chalcone synthase 5 (CHS5) from Trifolium subterraneum (Subterranean clover).